The primary structure comprises 201 residues: Small ribosomal subunit protein uS10m (201 aa).

This sequence belongs to the universal ribosomal protein uS10 family. In terms of assembly, component of the mitochondrial small ribosomal subunit (mt-SSU). Mature mammalian 55S mitochondrial ribosomes consist of a small (28S) and a large (39S) subunit. The 28S small subunit contains a 12S ribosomal RNA (12S mt-rRNA) and 30 different proteins. The 39S large subunit contains a 16S rRNA (16S mt-rRNA), a copy of mitochondrial valine transfer RNA (mt-tRNA(Val)), which plays an integral structural role, and 52 different proteins.

It is found in the mitochondrion. The chain is Small ribosomal subunit protein uS10m (MRPS10) from Homo sapiens (Human).